The chain runs to 37 residues: Large ribosomal subunit protein bL36 (37 aa).

It belongs to the bacterial ribosomal protein bL36 family.

The chain is Large ribosomal subunit protein bL36 from Mycoplasmopsis synoviae (strain 53) (Mycoplasma synoviae).